The sequence spans 1342 residues: DNA-directed RNA polymerase subunit beta (1342 aa).

Belongs to the RNA polymerase beta chain family. In terms of assembly, the RNAP catalytic core consists of 2 alpha, 1 beta, 1 beta' and 1 omega subunit. When a sigma factor is associated with the core the holoenzyme is formed, which can initiate transcription.

It carries out the reaction RNA(n) + a ribonucleoside 5'-triphosphate = RNA(n+1) + diphosphate. Functionally, DNA-dependent RNA polymerase catalyzes the transcription of DNA into RNA using the four ribonucleoside triphosphates as substrates. The polypeptide is DNA-directed RNA polymerase subunit beta (Tolumonas auensis (strain DSM 9187 / NBRC 110442 / TA 4)).